The sequence spans 232 residues: Phosphatidylserine decarboxylase proenzyme (232 aa).

The active-site Schiff-base intermediate with substrate; via pyruvic acid is S190. Residue S190 is modified to Pyruvic acid (Ser); by autocatalysis.

This sequence belongs to the phosphatidylserine decarboxylase family. PSD-A subfamily. In terms of assembly, heterodimer of a large membrane-associated beta subunit and a small pyruvoyl-containing alpha subunit. It depends on pyruvate as a cofactor. Post-translationally, is synthesized initially as an inactive proenzyme. Formation of the active enzyme involves a self-maturation process in which the active site pyruvoyl group is generated from an internal serine residue via an autocatalytic post-translational modification. Two non-identical subunits are generated from the proenzyme in this reaction, and the pyruvate is formed at the N-terminus of the alpha chain, which is derived from the carboxyl end of the proenzyme. The post-translation cleavage follows an unusual pathway, termed non-hydrolytic serinolysis, in which the side chain hydroxyl group of the serine supplies its oxygen atom to form the C-terminus of the beta chain, while the remainder of the serine residue undergoes an oxidative deamination to produce ammonia and the pyruvoyl prosthetic group on the alpha chain.

It is found in the cell membrane. It carries out the reaction a 1,2-diacyl-sn-glycero-3-phospho-L-serine + H(+) = a 1,2-diacyl-sn-glycero-3-phosphoethanolamine + CO2. It participates in phospholipid metabolism; phosphatidylethanolamine biosynthesis; phosphatidylethanolamine from CDP-diacylglycerol: step 2/2. In terms of biological role, catalyzes the formation of phosphatidylethanolamine (PtdEtn) from phosphatidylserine (PtdSer). This chain is Phosphatidylserine decarboxylase proenzyme, found in Bradyrhizobium diazoefficiens (strain JCM 10833 / BCRC 13528 / IAM 13628 / NBRC 14792 / USDA 110).